Here is a 558-residue protein sequence, read N- to C-terminus: Formate--tetrahydrofolate ligase (558 aa).

Residue 66 to 73 participates in ATP binding; that stretch reads TPAGEGKT.

It belongs to the formate--tetrahydrofolate ligase family.

The enzyme catalyses (6S)-5,6,7,8-tetrahydrofolate + formate + ATP = (6R)-10-formyltetrahydrofolate + ADP + phosphate. The protein operates within one-carbon metabolism; tetrahydrofolate interconversion. The polypeptide is Formate--tetrahydrofolate ligase (Neisseria meningitidis serogroup B (strain ATCC BAA-335 / MC58)).